A 130-amino-acid polypeptide reads, in one-letter code: Small ribosomal subunit protein uS11 (130 aa).

The protein belongs to the universal ribosomal protein uS11 family. Part of the 30S ribosomal subunit. Interacts with proteins S7 and S18. Binds to IF-3.

In terms of biological role, located on the platform of the 30S subunit, it bridges several disparate RNA helices of the 16S rRNA. Forms part of the Shine-Dalgarno cleft in the 70S ribosome. In Dehalococcoides mccartyi (strain ATCC BAA-2100 / JCM 16839 / KCTC 5957 / BAV1), this protein is Small ribosomal subunit protein uS11.